The sequence spans 163 residues: MIKKKNKKSYTSVYALGQYISMSTHKARRVIDQIRGRSYEEALMILELMPYRGCYPIFKLVYSAAANASHNKGFKETNLVISKAEVNQGNTVKKLKPRARGRSYPIKRSTCHITIVLEDISFYEQYKEYDEYFMYLKKPGSSNENKNLTCYDTYSSGGLWDKK.

This sequence belongs to the universal ribosomal protein uL22 family. As to quaternary structure, part of the 50S ribosomal subunit.

It localises to the plastid. Its subcellular location is the chloroplast. Functionally, this protein binds specifically to 23S rRNA. Its function is as follows. The globular domain of the protein is located near the polypeptide exit tunnel on the outside of the subunit, while an extended beta-hairpin is found that lines the wall of the exit tunnel in the center of the 70S ribosome. This is Large ribosomal subunit protein uL22c (rpl22) from Lobularia maritima (Sweet alyssum).